The sequence spans 352 residues: Ni-sirohydrochlorin a,c-diamide reductive cyclase complex, component CfbD (352 aa).

The protein belongs to the NifD/NifK/NifE/NifN family. As to quaternary structure, homodimer or monomer. The Ni-sirohydrochlorin a,c-diamide reductive cyclase complex is composed of a NifH homolog component CfbC and a NifD homolog component CfbD. [4Fe-4S] cluster is required as a cofactor.

The catalysed reaction is Ni-sirohydrochlorin a,c-diamide + 3 AH2 + ATP + H2O = 15,17(3)-seco-F430-17(3)-acid + 3 A + ADP + phosphate. In terms of biological role, involved in the biosynthesis of the unique nickel-containing tetrapyrrole coenzyme F430, the prosthetic group of methyl-coenzyme M reductase (MCR), which plays a key role in methanogenesis and anaerobic methane oxidation. Catalyzes both the six-electron reduction of the tetrahydroporphyrin ring system and the gamma-lactamization of the c-acetamide side chain of Ni-sirohydrochlorin a,c-diamide to yield 15,17(3)-seco-F430-17(3)-acid (seco-F430), the last intermediate in the biosynthesis of the coenzyme F430. The protein is Ni-sirohydrochlorin a,c-diamide reductive cyclase complex, component CfbD of Methanocaldococcus jannaschii (strain ATCC 43067 / DSM 2661 / JAL-1 / JCM 10045 / NBRC 100440) (Methanococcus jannaschii).